The chain runs to 504 residues: D-alanine--D-alanyl carrier protein ligase (504 aa).

152-153 is a binding site for ATP; the sequence is TS. Asp197 provides a ligand contact to D-alanine. 292–297 serves as a coordination point for ATP; sequence NTYGPT. Position 301 (Val301) interacts with D-alanine. Residues Asp383, 394-397, and Lys492 contribute to the ATP site; that span reads YNGR. Lys492 contacts D-alanine.

This sequence belongs to the ATP-dependent AMP-binding enzyme family. DltA subfamily.

The protein resides in the cytoplasm. The catalysed reaction is holo-[D-alanyl-carrier protein] + D-alanine + ATP = D-alanyl-[D-alanyl-carrier protein] + AMP + diphosphate. The protein operates within cell wall biogenesis; lipoteichoic acid biosynthesis. Functionally, catalyzes the first step in the D-alanylation of lipoteichoic acid (LTA), the activation of D-alanine and its transfer onto the D-alanyl carrier protein (Dcp) DltC. In an ATP-dependent two-step reaction, forms a high energy D-alanyl-AMP intermediate, followed by transfer of the D-alanyl residue as a thiol ester to the phosphopantheinyl prosthetic group of the Dcp. D-alanylation of LTA plays an important role in modulating the properties of the cell wall in Gram-positive bacteria, influencing the net charge of the cell wall. The chain is D-alanine--D-alanyl carrier protein ligase from Bacillus cereus (strain Q1).